The primary structure comprises 191 residues: Thymidine kinase (191 aa).

ATP is bound by residues 15 to 22 and 88 to 91; these read GPMYSGKT and DEAQ. Glu-89 (proton acceptor) is an active-site residue. Cys-145, Cys-148, Cys-183, and Cys-186 together coordinate Zn(2+).

The protein belongs to the thymidine kinase family. In terms of assembly, homotetramer.

Its subcellular location is the cytoplasm. The catalysed reaction is thymidine + ATP = dTMP + ADP + H(+). This chain is Thymidine kinase, found in Clostridium botulinum (strain Hall / ATCC 3502 / NCTC 13319 / Type A).